Reading from the N-terminus, the 977-residue chain is Myb-like protein I (977 aa).

Residues 1-122 (MMNNQSMVRY…QQQQQQLDKS (122 aa)) are disordered. Positions 21–39 (PSPPVYSPIYRSPPPPPQP) are enriched in pro residues. A compositionally biased stretch (basic and acidic residues) spans 52 to 68 (DNSHHQVMDNSDHEQQQ). Over residues 75-118 (QQQQQQQHHHQQQQQQQHHQQQQQQHHQQQQQHHHQQQQQQQQQ) the composition is skewed to low complexity. An HTH myb-type domain is found at 167–222 (EKKKQSRYWTPEEHSRFIEALSKYGHKDVKSISQYVSTRNPTQVRTHAQKYFLRID). A DNA-binding region (H-T-H motif) is located at residues 195 to 218 (VKSISQYVSTRNPTQVRTHAQKYF). Disordered stretches follow at residues 229–331 (LESK…SSPL), 422–516 (INNN…SSQP), 531–650 (NNNN…QQQM), 738–853 (LNSN…WPGP), and 872–960 (NYVP…GMNQ). The span at 241–252 (KDDDWLREEYND) shows a compositional bias: acidic residues. Residues 254-275 (GSPTQYSSCSNSPTTNSVANPF) are compositionally biased toward polar residues. Low complexity-rich tracts occupy residues 276 to 329 (SNSL…GNSS) and 422 to 504 (INNN…INNN). The span at 505–516 (GPNSPNLLSSQP) shows a compositional bias: polar residues. The span at 738-754 (LNSNSGNSSPNISSING) shows a compositional bias: low complexity. Residues 783–797 (LSGSPSHSPAQSPHY) are compositionally biased toward polar residues. Composition is skewed to low complexity over residues 798–848 (NLNN…SHSI) and 887–943 (SPHF…GSGS). Residues 944-960 (WHQYQATDSPTGWGMNQ) show a composition bias toward polar residues.

The protein resides in the nucleus. The polypeptide is Myb-like protein I (mybI) (Dictyostelium discoideum (Social amoeba)).